The following is a 317-amino-acid chain: Tricarboxylate transport protein B, mitochondrial (317 aa).

A propeptide spans 1–20 (MSGSPKFVSPFHRPHCLSAA) (removed in mature form). Solcar repeat units follow at residues 29–117 (THPG…LSNQ), 128–214 (TRGL…LRNW), and 224–309 (INPV…VVKV). 4 helical membrane passes run 35 to 55 (ILAG…TEYV), 130 to 150 (GLIC…CPME), 223 to 243 (SINP…SVFG), and 294 to 314 (MDVA…NKVW).

The protein belongs to the mitochondrial carrier (TC 2.A.29) family. Post-translationally, possesses a short cleavable presequence, which, however, is found to be dispensable both for targeting to mitochondria and insertion into the inner membrane. However, the presequence is required to keep SLC25A1 in a soluble state and thus in an import-competent state. Mature SLC25A1 lacking the presequence is prone to aggregation.

It localises to the mitochondrion inner membrane. It catalyses the reaction (S)-malate(in) + citrate(out) = (S)-malate(out) + citrate(in). It carries out the reaction D-threo-isocitrate(in) + citrate(out) = D-threo-isocitrate(out) + citrate(in). The catalysed reaction is citrate(out) + succinate(in) = citrate(in) + succinate(out). The enzyme catalyses cis-aconitate(in) + citrate(out) = cis-aconitate(out) + citrate(in). It catalyses the reaction trans-aconitate(in) + citrate(out) = trans-aconitate(out) + citrate(in). It carries out the reaction phosphoenolpyruvate(in) + citrate(out) = phosphoenolpyruvate(out) + citrate(in). The catalysed reaction is maleate(in) + citrate(out) = maleate(out) + citrate(in). Functionally, mitochondrial electroneutral antiporter that exports citrate from the mitochondria into the cytosol in exchange for malate. Also able to mediate the exchange of citrate for isocitrate, phosphoenolpyruvate, cis-aconitate and to a lesser extent trans-aconitate, maleate and succinate. In the cytoplasm, citrate plays important roles in fatty acid and sterol synthesis, regulation of glycolysis, protein acetylation, and other physiopathological processes. The polypeptide is Tricarboxylate transport protein B, mitochondrial (Danio rerio (Zebrafish)).